A 240-amino-acid chain; its full sequence is SURF1-like protein (240 aa).

2 helical membrane passes run 7–23 (VFIT…WQLS) and 201–219 (YALT…YVIY).

The protein belongs to the SURF1 family.

The protein localises to the cell membrane. The protein is SURF1-like protein of Rickettsia conorii (strain ATCC VR-613 / Malish 7).